We begin with the raw amino-acid sequence, 698 residues long: UvrABC system protein B (698 aa).

The 176-residue stretch at 35–210 (ARLQAGEKDI…TFRVRGDTVE (176 aa)) folds into the Helicase ATP-binding domain. ATP is bound at residue 48-55 (GATGTGKS). Residues 101–124 (YYDYYQPEAYVPSSDTYIEKDSSI) carry the Beta-hairpin motif. The region spanning 438 to 604 (QIDDLLAEIN…PLRKRIGDIT (167 aa)) is the Helicase C-terminal domain. The UVR domain maps to 654–689 (AELIQELTDQMHVAAGELQFEVAARLRDEISDLKKE).

The protein belongs to the UvrB family. As to quaternary structure, forms a heterotetramer with UvrA during the search for lesions. Interacts with UvrC in an incision complex.

The protein localises to the cytoplasm. Its function is as follows. The UvrABC repair system catalyzes the recognition and processing of DNA lesions. A damage recognition complex composed of 2 UvrA and 2 UvrB subunits scans DNA for abnormalities. Upon binding of the UvrA(2)B(2) complex to a putative damaged site, the DNA wraps around one UvrB monomer. DNA wrap is dependent on ATP binding by UvrB and probably causes local melting of the DNA helix, facilitating insertion of UvrB beta-hairpin between the DNA strands. Then UvrB probes one DNA strand for the presence of a lesion. If a lesion is found the UvrA subunits dissociate and the UvrB-DNA preincision complex is formed. This complex is subsequently bound by UvrC and the second UvrB is released. If no lesion is found, the DNA wraps around the other UvrB subunit that will check the other stand for damage. The chain is UvrABC system protein B from Beutenbergia cavernae (strain ATCC BAA-8 / DSM 12333 / CCUG 43141 / JCM 11478 / NBRC 16432 / NCIMB 13614 / HKI 0122).